The chain runs to 695 residues: MAQLDTLDVVVLAVLLAGSIAYFTKGTFWAVAKDPYASSGPAMNGVAKAGKSRNIIEKMDETGKNCVIFYGSQTGTAEDYASRLAKEGSQRFGLKTMVADIEEYDYENLDQFPEDKVAFFVLATYGEGEPTDNAVEFYQFITGDDVSFEGGGSAEDKPLSSLKYVAFGLGNNTYEHYNAMVRQVDAALTKLGAQRIGSAGEGDDGAGTMEEDFLAWKEPMWAALSEAMNLQEREASYEPVFCVTEDESLTPEDNSVYLGEPTKGHLEGQPNGPYSAHNPYIAPIVESRELFTVKDRNCLHMEISIAGTNLTYQTGDHIAIWPTNAGAEVDRFLNVFGLEEKRHSVINIKGIDVTAKVPIPTPTTYDAAVRYYMEVCAPVSRQFVSTLAAFAPDEETKTEIVRLGSDKDYFHEKITNQCFNIAQALQSITSKPFSNVPFSLLIEGLNKIQPRYYSISSSSLVQKDKISITAVVESTRLPGATHIVKGVTTNYLLALKQKQNGDPSPDPHGQTYAINGPRNKYDGIHVPVHVRHSNFKLPSDPSRPIIMIGPGTGVAPFRGFIQERAALAARGEKVGPTVLFFGCRKRDEDFLYKDEWKVFQDQLGDSLKIITAFSRESEKKVYVQHRLKEHAELVSDLLKQKATFYVCGDAANMAREVNLVLGQIIAAQRGLPAEKGEEMVKHMRSSGSYQEDVWS.

Residues 1-8 are Lumenal-facing; that stretch reads MAQLDTLD. The chain crosses the membrane as a helical span at residues 9–31; the sequence is VVVLAVLLAGSIAYFTKGTFWAV. At 32 to 695 the chain is on the cytoplasmic side; that stretch reads AKDPYASSGP…SGSYQEDVWS (664 aa). In terms of domain architecture, Flavodoxin-like spans 66–221; that stretch reads CVIFYGSQTG…DFLAWKEPMW (156 aa). FMN-binding positions include 72 to 77, 123 to 126, 169 to 178, and Asp-204; these read SQTGTA, ATYG, and LGNNTYEHYN. In terms of domain architecture, FAD-binding FR-type spans 277-538; the sequence is HNPYIAPIVE…HVRHSNFKLP (262 aa). Arg-296 lines the NADP(+) pocket. Residues 451–454, 469–471, and 486–489 contribute to the FAD site; these read RYYS, TAV, and GVTT. The interval 497–516 is disordered; the sequence is QKQNGDPSPDPHGQTYAING. Residues Thr-552, 614 to 615, 620 to 624, and Glu-656 contribute to the NADP(+) site; these read SR and KVYVQ. Residue Trp-694 coordinates FAD.

This sequence belongs to the NADPH--cytochrome P450 reductase family. It in the N-terminal section; belongs to the flavodoxin family. In the C-terminal section; belongs to the flavoprotein pyridine nucleotide cytochrome reductase family. Requires FAD as cofactor. It depends on FMN as a cofactor.

It is found in the endoplasmic reticulum membrane. The protein resides in the mitochondrion outer membrane. Its subcellular location is the cell membrane. It catalyses the reaction 2 oxidized [cytochrome P450] + NADPH = 2 reduced [cytochrome P450] + NADP(+) + H(+). Functionally, this enzyme is required for electron transfer from NADP to cytochrome P450 in microsomes. It can also provide electron transfer to heme oxygenase and cytochrome B5. Involved in ergosterol biosynthesis. The chain is NADPH--cytochrome P450 reductase from Emericella nidulans (strain FGSC A4 / ATCC 38163 / CBS 112.46 / NRRL 194 / M139) (Aspergillus nidulans).